The chain runs to 361 residues: Phosphoserine aminotransferase (361 aa).

Residue Arg42 coordinates L-glutamate. Residues 76–77 (AS), Trp102, Thr152, Asp172, and Gln195 contribute to the pyridoxal 5'-phosphate site. Lys196 is modified (N6-(pyridoxal phosphate)lysine). Position 237 to 238 (237 to 238 (NT)) interacts with pyridoxal 5'-phosphate.

This sequence belongs to the class-V pyridoxal-phosphate-dependent aminotransferase family. SerC subfamily. As to quaternary structure, homodimer. The cofactor is pyridoxal 5'-phosphate.

Its subcellular location is the cytoplasm. The enzyme catalyses O-phospho-L-serine + 2-oxoglutarate = 3-phosphooxypyruvate + L-glutamate. The catalysed reaction is 4-(phosphooxy)-L-threonine + 2-oxoglutarate = (R)-3-hydroxy-2-oxo-4-phosphooxybutanoate + L-glutamate. It functions in the pathway amino-acid biosynthesis; L-serine biosynthesis; L-serine from 3-phospho-D-glycerate: step 2/3. Functionally, catalyzes the reversible conversion of 3-phosphohydroxypyruvate to phosphoserine and of 3-hydroxy-2-oxo-4-phosphonooxybutanoate to phosphohydroxythreonine. This is Phosphoserine aminotransferase from Halalkalibacterium halodurans (strain ATCC BAA-125 / DSM 18197 / FERM 7344 / JCM 9153 / C-125) (Bacillus halodurans).